Reading from the N-terminus, the 1936-residue chain is Trinucleotide repeat-containing gene 6C protein (1936 aa).

Residues 1-31 (MEEKKKKKQEEKKKKEGAQKKAADQKTKVPE) are compositionally biased toward basic and acidic residues. Disordered stretches follow at residues 1 to 160 (MEEK…PTYR), 181 to 256 (PSIT…NSNG), 366 to 412 (PQES…AMQT), 439 to 931 (NGSS…IRRK), 961 to 1063 (VIQS…VAFG), and 1115 to 1139 (ESTSSCSSWGNAPKKGLQKGMKTSG). The span at 34–44 (KTCSSQPQPAG) shows a compositional bias: polar residues. Over residues 45 to 57 (TSTSTSTSTISSS) the composition is skewed to low complexity. Polar residues predominate over residues 58–71 (NNGKRASASGQQPA). Residues 76–88 (LPREVPPRFRQQE) show a composition bias toward basic and acidic residues. 2 stretches are compositionally biased toward polar residues: residues 100–111 (PTGTLTSVSPTQ) and 183–217 (ITGTETESASECTTDTDSASNCGSENSSMATGSAQ). Residues 211–1133 (MATGSAQGNF…GNAPKKGLQK (923 aa)) are sufficient for interaction with argonaute family proteins. The span at 218–235 (GNFTGHTKKTNGNNGTNG) shows a compositional bias: low complexity. The span at 366 to 393 (PQESTEPQTSTSQNVSFSAQPQNLNTDG) shows a compositional bias: polar residues. Low complexity-rich tracts occupy residues 394 to 408 (PNNTNPMNSSPNPIN), 439 to 453 (NGSSVSQVSGGSAEG), and 469 to 480 (GNSNSGFSQGNG). The segment covering 481 to 498 (DTVNSALSAKQNGSSSAV) has biased composition (polar residues). At arginine 523 the chain carries Omega-N-methylarginine. Over residues 572–585 (GWESPSVTSQNPTV) the composition is skewed to polar residues. Positions 594–614 (SWAKAASSGTTASEGSSDGSG) are enriched in low complexity. The span at 625 to 636 (GTGEGRRRDKGI) shows a compositional bias: basic and acidic residues. The segment covering 654 to 669 (LSNTGWGQTPVKQNTA) has biased composition (polar residues). The span at 674–684 (ESPRSERKNDN) shows a compositional bias: basic and acidic residues. Serine 675 is subject to Phosphoserine. The segment covering 694–718 (TQASNSGGKNDGSIMNSTNTSSVSG) has biased composition (polar residues). Low complexity-rich tracts occupy residues 720-730 (VNAPPAAVPAN) and 750-772 (SISSTAVSTAAAAKSGHAWSGAA). 2 stretches are compositionally biased toward polar residues: residues 834–866 (NRSGSGWNDTTRSGNSGWGNSTNTKANPGTNWG) and 873–888 (PQQNWASKPQDNNVSN). Serine 924 bears the Phosphoserine mark. Positions 964–982 (SSTTTNTTTTTTTTTSNTT) are enriched in low complexity. Threonine 987 is subject to Phosphothreonine. The segment covering 1021 to 1035 (ENSWGEPSSPSTLVD) has biased composition (polar residues). Residues 1140 to 1185 (KQDEAWIMSRLIKQLTDMGFPREPAEEALKSNNMNLDQAMSALLEK) enclose the UBA domain. Serine 1218 carries the phosphoserine modification. Disordered regions lie at residues 1291-1312 (AAQARTMQQPPQPPVQPLNSSQ), 1419-1658 (VKQP…PSSS), 1689-1732 (STWS…PSST), and 1848-1869 (TSSWQSSSASSQPRLSAAGSSH). Positions 1388-1419 (MRQQEQQVARTITNLQQQIQQHQRQLAQALLV) form a coiled coil. The segment covering 1421–1430 (QPPPPPPPPH) has biased composition (pro residues). The silencing domain; interaction with CNOT1 and PAN3 stretch occupies residues 1467–1936 (NTFAPYPLAG…PGDLLSGESL (470 aa)). A compositionally biased stretch (polar residues) spans 1496–1515 (DPSQSQSRLPQWTHPNSMDN). Residues 1578 to 1624 (KSDSDKISNGSSINWPPEFHPGVPWKGLQNIDPENDPDVTPGSVPTG) are required for interaction with PABPC1. The tract at residues 1578 to 1936 (KSDSDKISNG…PGDLLSGESL (359 aa)) is sufficient for translational repression when tethered to a target mRNA. Residues 1588-1606 (SSINWPPEFHPGVPWKGLQ) form a PABPC1-interacting motif-2 (PAM2) region. Over residues 1623-1633 (TGPTINTTIQD) the composition is skewed to polar residues. Over residues 1641-1658 (SGGSSPPSSQNATLPSSS) the composition is skewed to low complexity. Positions 1689–1703 (STWSSGPTSHTQASL) are enriched in polar residues. Residues 1811–1878 (AQKSLHMCVL…HGLVRSDAGH (68 aa)) enclose the RRM domain. Residues 1842-1936 (GQALPPTSSW…PGDLLSGESL (95 aa)) are interaction with the CCR4-NOT complex. Over residues 1848–1865 (TSSWQSSSASSQPRLSAA) the composition is skewed to low complexity.

Belongs to the GW182 family. As to quaternary structure, interacts with one or more of the argonaute family proteins AGO1, AGO2, AGO3 and AGO4. Interacts with PABPC1 and EIF4G1. Interacts with CNOT1; the interaction is direct and mediates the association with the CCR4-NOT complex. Interacts with PAN3; the interaction mediates the association with the PAN complex.

Its function is as follows. Plays a role in RNA-mediated gene silencing by micro-RNAs (miRNAs). Required for miRNA-dependent translational repression of complementary mRNAs by argonaute family proteins. As scaffoldng protein associates with argonaute proteins bound to partially complementary mRNAs and simultaneously can recruit CCR4-NOT and PAN deadenylase complexes. The sequence is that of Trinucleotide repeat-containing gene 6C protein (TNRC6C) from Homo sapiens (Human).